The primary structure comprises 79 residues: Small ribosomal subunit protein bS16 (79 aa).

It belongs to the bacterial ribosomal protein bS16 family.

The polypeptide is Small ribosomal subunit protein bS16 (Buchnera aphidicola subsp. Acyrthosiphon pisum (strain 5A)).